The following is a 122-amino-acid chain: Large ribosomal subunit protein uL14 (122 aa).

The protein belongs to the universal ribosomal protein uL14 family. Part of the 50S ribosomal subunit. Forms a cluster with proteins L3 and L19. In the 70S ribosome, L14 and L19 interact and together make contacts with the 16S rRNA in bridges B5 and B8.

Functionally, binds to 23S rRNA. Forms part of two intersubunit bridges in the 70S ribosome. This is Large ribosomal subunit protein uL14 from Spiroplasma citri.